The sequence spans 790 residues: Kinesin-like protein KIF9 (790 aa).

One can recognise a Kinesin motor domain in the interval 6–340; that stretch reads KVQAFVRVRP…LRFASRMKLV (335 aa). ATP contacts are provided by residues 12 to 14 and 93 to 100; these read RVR and GQTGAGKT. A coiled-coil region spans residues 342–442; that stretch reads TEPAINEKYD…EQEVESALRR (101 aa). The disordered stretch occupies residues 482–521; the sequence is GVAPFSVKPGKKPKTKKTPKDQFSSSARKEGASSPVSGKD. A Phosphothreonine modification is found at Thr-530. The tract at residues 547–577 is disordered; that stretch reads RERETSSIEPLISDSPKEELRAPRPSTPPSR. Residues 600–695 adopt a coiled-coil conformation; the sequence is KSILNERKKR…YCQRLVDQCR (96 aa).

This sequence belongs to the TRAFAC class myosin-kinesin ATPase superfamily. Kinesin family. In terms of assembly, interacts with HYDIN. In terms of tissue distribution, highly expressed in the testis (at protein level). Weakly expressed in the brain, thymus, lung and heart.

The protein resides in the cytoplasm. Its subcellular location is the cytoskeleton. It is found in the cell projection. The protein localises to the cilium. It localises to the flagellum. The protein resides in the flagellum axoneme. In terms of biological role, essential for normal male fertility and for progressive motility of spermatozoa. This chain is Kinesin-like protein KIF9 (Kif9), found in Mus musculus (Mouse).